A 545-amino-acid polypeptide reads, in one-letter code: Sulfite oxidase, mitochondrial (545 aa).

The N-terminal 79 residues, 1–79 (MLLLHRAVVL…YQDHRCRAAQ (79 aa)), are a transit peptide targeting the mitochondrion. Residues 82 to 161 (TRIYTKEEVS…LAQYKVGELN (80 aa)) form the Cytochrome b5 heme-binding domain. His118 contributes to the heme b binding site. Ser123 bears the Phosphoserine mark. His143, Gln145, and His147 together coordinate heme b. The interval 165-174 (KVAPTVETSD) is hinge. Residues 175–401 (PYADDPVRHP…YSHWQRRDYK (227 aa)) are moco domain. Mo-molybdopterin contacts are provided by residues 215–219 (FTRNH), Cys264, Asp322, His361, Arg366, and 377–379 (HVK). The homodimerization stretch occupies residues 402 to 538 (GFSPSVDWDT…RGVLSNAWHR (137 aa)).

Homodimer. It depends on heme b as a cofactor. Requires Mo-molybdopterin as cofactor.

The protein resides in the mitochondrion intermembrane space. The catalysed reaction is sulfite + O2 + H2O = sulfate + H2O2. Its pathway is energy metabolism; sulfur metabolism. Functionally, catalyzes the oxidation of sulfite to sulfate, the terminal reaction in the oxidative degradation of sulfur-containing amino acids. The polypeptide is Sulfite oxidase, mitochondrial (SUOX) (Macaca fascicularis (Crab-eating macaque)).